The primary structure comprises 178 residues: Bifunctional protein PyrR (178 aa).

Residues 99–111 carry the PRPP-binding motif; it reads VVLVDDVIFKGRT.

The protein belongs to the purine/pyrimidine phosphoribosyltransferase family. PyrR subfamily.

The catalysed reaction is UMP + diphosphate = 5-phospho-alpha-D-ribose 1-diphosphate + uracil. Regulates the transcription of the pyrimidine nucleotide (pyr) operon in response to exogenous pyrimidines. In terms of biological role, also displays a weak uracil phosphoribosyltransferase activity which is not physiologically significant. This chain is Bifunctional protein PyrR, found in Nostoc punctiforme (strain ATCC 29133 / PCC 73102).